Reading from the N-terminus, the 697-residue chain is Elongation factor G 2 (697 aa).

The tr-type G domain maps to 5–280 (SKYRNIGIFA…AVVDYLPAPN (276 aa)). GTP-binding positions include 14–21 (AHVDAGKT), 78–82 (DTPGH), and 132–135 (NKLD).

This sequence belongs to the TRAFAC class translation factor GTPase superfamily. Classic translation factor GTPase family. EF-G/EF-2 subfamily.

It localises to the cytoplasm. Functionally, catalyzes the GTP-dependent ribosomal translocation step during translation elongation. During this step, the ribosome changes from the pre-translocational (PRE) to the post-translocational (POST) state as the newly formed A-site-bound peptidyl-tRNA and P-site-bound deacylated tRNA move to the P and E sites, respectively. Catalyzes the coordinated movement of the two tRNA molecules, the mRNA and conformational changes in the ribosome. This is Elongation factor G 2 from Shewanella sp. (strain MR-4).